Here is a 141-residue protein sequence, read N- to C-terminus: Small ribosomal subunit protein uS12 (141 aa).

Residues 1–11 are compositionally biased toward polar residues; it reads MPTISQLVTTS. The tract at residues 1–22 is disordered; that stretch reads MPTISQLVTTSRQDKNYKSKSP. 3-methylthioaspartic acid is present on D102.

Belongs to the universal ribosomal protein uS12 family. As to quaternary structure, part of the 30S ribosomal subunit. Contacts proteins S8 and S17. May interact with IF1 in the 30S initiation complex.

Functionally, with S4 and S5 plays an important role in translational accuracy. Interacts with and stabilizes bases of the 16S rRNA that are involved in tRNA selection in the A site and with the mRNA backbone. Located at the interface of the 30S and 50S subunits, it traverses the body of the 30S subunit contacting proteins on the other side and probably holding the rRNA structure together. The combined cluster of proteins S8, S12 and S17 appears to hold together the shoulder and platform of the 30S subunit. This is Small ribosomal subunit protein uS12 from Acholeplasma laidlawii (strain PG-8A).